The chain runs to 85 residues: Large ribosomal subunit protein bL27 (85 aa).

The interval 1–24 is disordered; that stretch reads MAHKKGQGSSRNGRDSNAQRRGVK.

It belongs to the bacterial ribosomal protein bL27 family.

This is Large ribosomal subunit protein bL27 from Syntrophus aciditrophicus (strain SB).